Here is a 110-residue protein sequence, read N- to C-terminus: DNA-directed RNA polymerase subunit omega (110 aa).

This sequence belongs to the RNA polymerase subunit omega family. The RNAP catalytic core consists of 2 alpha, 1 beta, 1 beta' and 1 omega subunit. When a sigma factor is associated with the core the holoenzyme is formed, which can initiate transcription.

The enzyme catalyses RNA(n) + a ribonucleoside 5'-triphosphate = RNA(n+1) + diphosphate. Promotes RNA polymerase assembly. Latches the N- and C-terminal regions of the beta' subunit thereby facilitating its interaction with the beta and alpha subunits. This Mycobacterium leprae (strain Br4923) protein is DNA-directed RNA polymerase subunit omega.